Here is a 1232-residue protein sequence, read N- to C-terminus: uncharacterized protein (1232 aa).

It belongs to the Mg-chelatase subunit H family.

This is an uncharacterized protein from Methanocaldococcus jannaschii (strain ATCC 43067 / DSM 2661 / JAL-1 / JCM 10045 / NBRC 100440) (Methanococcus jannaschii).